Here is a 356-residue protein sequence, read N- to C-terminus: Phenylalanine--tRNA ligase alpha subunit (356 aa).

Residue Glu-258 participates in Mg(2+) binding.

It belongs to the class-II aminoacyl-tRNA synthetase family. Phe-tRNA synthetase alpha subunit type 1 subfamily. As to quaternary structure, tetramer of two alpha and two beta subunits. Mg(2+) serves as cofactor.

The protein localises to the cytoplasm. It catalyses the reaction tRNA(Phe) + L-phenylalanine + ATP = L-phenylalanyl-tRNA(Phe) + AMP + diphosphate + H(+). The sequence is that of Phenylalanine--tRNA ligase alpha subunit from Macrococcus caseolyticus (strain JCSC5402) (Macrococcoides caseolyticum).